The chain runs to 431 residues: uncharacterized protein (431 aa).

This is an uncharacterized protein from Acanthamoeba polyphaga mimivirus (APMV).